A 954-amino-acid chain; its full sequence is Leucine--tRNA ligase (954 aa).

Positions 40-51 (PYPSGAGLHVGH) match the 'HIGH' region motif. Positions 729 to 733 (KMSKS) match the 'KMSKS' region motif. Lysine 732 provides a ligand contact to ATP.

Belongs to the class-I aminoacyl-tRNA synthetase family.

Its subcellular location is the cytoplasm. The catalysed reaction is tRNA(Leu) + L-leucine + ATP = L-leucyl-tRNA(Leu) + AMP + diphosphate. This is Leucine--tRNA ligase from Flavobacterium johnsoniae (strain ATCC 17061 / DSM 2064 / JCM 8514 / BCRC 14874 / CCUG 350202 / NBRC 14942 / NCIMB 11054 / UW101) (Cytophaga johnsonae).